A 185-amino-acid chain; its full sequence is dCTP deaminase (185 aa).

107-112 contacts dCTP; the sequence is KSTYAR. E133 serves as the catalytic Proton donor/acceptor. Positions 152, 166, and 176 each coordinate dCTP.

It belongs to the dCTP deaminase family. In terms of assembly, homotrimer.

It carries out the reaction dCTP + H2O + H(+) = dUTP + NH4(+). The protein operates within pyrimidine metabolism; dUMP biosynthesis; dUMP from dCTP (dUTP route): step 1/2. In terms of biological role, catalyzes the deamination of dCTP to dUTP. The sequence is that of dCTP deaminase from Nitratiruptor sp. (strain SB155-2).